The primary structure comprises 152 residues: Aspartate 1-decarboxylase (152 aa).

The active-site Schiff-base intermediate with substrate; via pyruvic acid is Ser-24. Ser-24 carries the post-translational modification Pyruvic acid (Ser). Thr-56 lines the substrate pocket. The active-site Proton donor is the Tyr-57. Substrate is bound at residue 72–74 (GAA).

It belongs to the PanD family. As to quaternary structure, heterooctamer of four alpha and four beta subunits. Pyruvate is required as a cofactor. In terms of processing, is synthesized initially as an inactive proenzyme, which is activated by self-cleavage at a specific serine bond to produce a beta-subunit with a hydroxyl group at its C-terminus and an alpha-subunit with a pyruvoyl group at its N-terminus.

Its subcellular location is the cytoplasm. It carries out the reaction L-aspartate + H(+) = beta-alanine + CO2. The protein operates within cofactor biosynthesis; (R)-pantothenate biosynthesis; beta-alanine from L-aspartate: step 1/1. In terms of biological role, catalyzes the pyruvoyl-dependent decarboxylation of aspartate to produce beta-alanine. The chain is Aspartate 1-decarboxylase from Rhodospirillum centenum (strain ATCC 51521 / SW).